Consider the following 399-residue polypeptide: 1-deoxy-D-xylulose 5-phosphate reductoisomerase (399 aa).

8 residues coordinate NADPH: Thr16, Gly17, Ser18, Ile19, Gly42, Arg43, Asn44, and Asn127. Lys128 lines the 1-deoxy-D-xylulose 5-phosphate pocket. Glu129 is an NADPH binding site. Position 153 (Asp153) interacts with Mn(2+). Ser154, Glu155, Ser179, and His202 together coordinate 1-deoxy-D-xylulose 5-phosphate. A Mn(2+)-binding site is contributed by Glu155. Gly208 serves as a coordination point for NADPH. The 1-deoxy-D-xylulose 5-phosphate site is built by Ser215, Asn220, Lys221, and Glu224. Residue Glu224 participates in Mn(2+) binding.

The protein belongs to the DXR family. The cofactor is Mg(2+). Mn(2+) is required as a cofactor.

It catalyses the reaction 2-C-methyl-D-erythritol 4-phosphate + NADP(+) = 1-deoxy-D-xylulose 5-phosphate + NADPH + H(+). The protein operates within isoprenoid biosynthesis; isopentenyl diphosphate biosynthesis via DXP pathway; isopentenyl diphosphate from 1-deoxy-D-xylulose 5-phosphate: step 1/6. In terms of biological role, catalyzes the NADPH-dependent rearrangement and reduction of 1-deoxy-D-xylulose-5-phosphate (DXP) to 2-C-methyl-D-erythritol 4-phosphate (MEP). The polypeptide is 1-deoxy-D-xylulose 5-phosphate reductoisomerase (Caulobacter vibrioides (strain NA1000 / CB15N) (Caulobacter crescentus)).